The sequence spans 344 residues: tRNA(Ile)-lysidine synthase (344 aa).

Ser43 to Ser48 is a binding site for ATP.

Belongs to the tRNA(Ile)-lysidine synthase family.

The protein resides in the cytoplasm. It catalyses the reaction cytidine(34) in tRNA(Ile2) + L-lysine + ATP = lysidine(34) in tRNA(Ile2) + AMP + diphosphate + H(+). In terms of biological role, ligates lysine onto the cytidine present at position 34 of the AUA codon-specific tRNA(Ile) that contains the anticodon CAU, in an ATP-dependent manner. Cytidine is converted to lysidine, thus changing the amino acid specificity of the tRNA from methionine to isoleucine. This is tRNA(Ile)-lysidine synthase from Bordetella parapertussis (strain 12822 / ATCC BAA-587 / NCTC 13253).